The following is a 384-amino-acid chain: Carbamoyl phosphate synthase small chain (384 aa).

Positions 1 to 193 (MTKPATTPAI…DSHPEIPASE (193 aa)) are CPSase. Residues serine 51, glycine 245, and glycine 247 each contribute to the L-glutamine site. The Glutamine amidotransferase type-1 domain occupies 197–384 (HVVAYDYGVK…ISAMAPVVDR (188 aa)). Cysteine 273 acts as the Nucleophile in catalysis. Leucine 274, glutamine 277, asparagine 315, glycine 317, and phenylalanine 318 together coordinate L-glutamine. Catalysis depends on residues histidine 357 and glutamate 359.

It belongs to the CarA family. Composed of two chains; the small (or glutamine) chain promotes the hydrolysis of glutamine to ammonia, which is used by the large (or ammonia) chain to synthesize carbamoyl phosphate. Tetramer of heterodimers (alpha,beta)4.

It catalyses the reaction hydrogencarbonate + L-glutamine + 2 ATP + H2O = carbamoyl phosphate + L-glutamate + 2 ADP + phosphate + 2 H(+). It carries out the reaction L-glutamine + H2O = L-glutamate + NH4(+). It participates in amino-acid biosynthesis; L-arginine biosynthesis; carbamoyl phosphate from bicarbonate: step 1/1. The protein operates within pyrimidine metabolism; UMP biosynthesis via de novo pathway; (S)-dihydroorotate from bicarbonate: step 1/3. Its function is as follows. Small subunit of the glutamine-dependent carbamoyl phosphate synthetase (CPSase). CPSase catalyzes the formation of carbamoyl phosphate from the ammonia moiety of glutamine, carbonate, and phosphate donated by ATP, constituting the first step of 2 biosynthetic pathways, one leading to arginine and/or urea and the other to pyrimidine nucleotides. The small subunit (glutamine amidotransferase) binds and cleaves glutamine to supply the large subunit with the substrate ammonia. In Stutzerimonas stutzeri (Pseudomonas stutzeri), this protein is Carbamoyl phosphate synthase small chain.